The chain runs to 214 residues: Adenylate kinase (214 aa).

10–15 contacts ATP; sequence GAGKGT. The NMP stretch occupies residues 30 to 59; that stretch reads STGDMLRAAVKAGTPLGLEAKKVMDAGQLV. Residues Thr-31, Arg-36, 57-59, 85-88, and Gln-92 each bind AMP; these read QLV and GFPR. The interval 122 to 159 is LID; that stretch reads GRRVHPGSGRVYHVVFNPPKVEGKDDVTGEDLAIRPDD. ATP is bound by residues Arg-123 and 132-133; that span reads VY. Arg-156 and Arg-167 together coordinate AMP. Gln-200 provides a ligand contact to ATP.

The protein belongs to the adenylate kinase family. In terms of assembly, monomer.

Its subcellular location is the cytoplasm. It carries out the reaction AMP + ATP = 2 ADP. It functions in the pathway purine metabolism; AMP biosynthesis via salvage pathway; AMP from ADP: step 1/1. Its function is as follows. Catalyzes the reversible transfer of the terminal phosphate group between ATP and AMP. Plays an important role in cellular energy homeostasis and in adenine nucleotide metabolism. This is Adenylate kinase from Shewanella sp. (strain ANA-3).